The primary structure comprises 340 residues: Phospho-N-acetylmuramoyl-pentapeptide-transferase (340 aa).

9 consecutive transmembrane segments (helical) span residues 22-42 (VVVP…LLIP), 69-89 (TMGG…WSGW), 95-115 (AVAL…WLVI), 129-149 (LLLQ…QGIP), 156-176 (GIGT…VLVG), 186-206 (GMDG…GLLH), 209-229 (PELS…LVHN), 235-257 (LFMG…LLGD), and 316-336 (VVGS…AWWH).

The protein belongs to the glycosyltransferase 4 family. MraY subfamily. Mg(2+) serves as cofactor.

It localises to the cell inner membrane. The catalysed reaction is UDP-N-acetyl-alpha-D-muramoyl-L-alanyl-gamma-D-glutamyl-meso-2,6-diaminopimeloyl-D-alanyl-D-alanine + di-trans,octa-cis-undecaprenyl phosphate = di-trans,octa-cis-undecaprenyl diphospho-N-acetyl-alpha-D-muramoyl-L-alanyl-D-glutamyl-meso-2,6-diaminopimeloyl-D-alanyl-D-alanine + UMP. It participates in cell wall biogenesis; peptidoglycan biosynthesis. Catalyzes the initial step of the lipid cycle reactions in the biosynthesis of the cell wall peptidoglycan: transfers peptidoglycan precursor phospho-MurNAc-pentapeptide from UDP-MurNAc-pentapeptide onto the lipid carrier undecaprenyl phosphate, yielding undecaprenyl-pyrophosphoryl-MurNAc-pentapeptide, known as lipid I. This chain is Phospho-N-acetylmuramoyl-pentapeptide-transferase, found in Synechococcus sp. (strain JA-2-3B'a(2-13)) (Cyanobacteria bacterium Yellowstone B-Prime).